Reading from the N-terminus, the 440-residue chain is Probable exopolygalacturonase C (440 aa).

Positions 1–21 (MLITNPALLGILASLVPLALG) are cleaved as a signal peptide. Residues asparagine 84 and asparagine 151 are each glycosylated (N-linked (GlcNAc...) asparagine). PbH1 repeat units follow at residues 188 to 210 (GDDI…PFNT), 217 to 238 (GTNI…AVNT), and 240 to 261 (SHNI…SIGS). A glycan (N-linked (GlcNAc...) asparagine) is linked at asparagine 219. Aspartate 231 (proton donor) is an active-site residue. Histidine 255 is a catalytic residue. Asparagine 271 is a glycosylation site (N-linked (GlcNAc...) asparagine). A PbH1 4 repeat occupies 272–293 (ITNLRFEDVTVIDALYAARFKS). Asparagine 313 is a glycosylation site (N-linked (GlcNAc...) asparagine). A disulfide bridge links cysteine 389 with cysteine 395. Asparagine 434 is a glycosylation site (N-linked (GlcNAc...) asparagine).

This sequence belongs to the glycosyl hydrolase 28 family.

It is found in the secreted. It carries out the reaction [(1-&gt;4)-alpha-D-galacturonosyl](n) + H2O = alpha-D-galacturonate + [(1-&gt;4)-alpha-D-galacturonosyl](n-1). Its function is as follows. Specific in hydrolyzing the terminal glycosidic bond of polygalacturonic acid and oligogalacturonates. The polypeptide is Probable exopolygalacturonase C (pgxC) (Aspergillus fumigatus (strain CBS 144.89 / FGSC A1163 / CEA10) (Neosartorya fumigata)).